A 51-amino-acid chain; its full sequence is Large ribosomal subunit protein bL33 (51 aa).

It belongs to the bacterial ribosomal protein bL33 family.

This is Large ribosomal subunit protein bL33 from Nitrosococcus oceani (strain ATCC 19707 / BCRC 17464 / JCM 30415 / NCIMB 11848 / C-107).